Reading from the N-terminus, the 362-residue chain is Chorismate synthase (362 aa).

NADP(+) is bound at residue R47. FMN contacts are provided by residues 124–126, G286, 301–305, and R327; these read RAS and KPTAT.

This sequence belongs to the chorismate synthase family. As to quaternary structure, homotetramer. The cofactor is FMNH2.

The enzyme catalyses 5-O-(1-carboxyvinyl)-3-phosphoshikimate = chorismate + phosphate. Its pathway is metabolic intermediate biosynthesis; chorismate biosynthesis; chorismate from D-erythrose 4-phosphate and phosphoenolpyruvate: step 7/7. In terms of biological role, catalyzes the anti-1,4-elimination of the C-3 phosphate and the C-6 proR hydrogen from 5-enolpyruvylshikimate-3-phosphate (EPSP) to yield chorismate, which is the branch point compound that serves as the starting substrate for the three terminal pathways of aromatic amino acid biosynthesis. This reaction introduces a second double bond into the aromatic ring system. This is Chorismate synthase from Prochlorococcus marinus (strain SARG / CCMP1375 / SS120).